Here is a 311-residue protein sequence, read N- to C-terminus: Ketoisovalerate oxidoreductase subunit VorB (311 aa).

As to quaternary structure, heterotetramer of one alpha, one beta, one delta and one gamma chain.

It catalyses the reaction 3-methyl-2-oxobutanoate + 2 oxidized [2Fe-2S]-[ferredoxin] + CoA = 2-methylpropanoyl-CoA + 2 reduced [2Fe-2S]-[ferredoxin] + CO2 + H(+). In Pyrococcus horikoshii (strain ATCC 700860 / DSM 12428 / JCM 9974 / NBRC 100139 / OT-3), this protein is Ketoisovalerate oxidoreductase subunit VorB (vorB).